A 52-amino-acid polypeptide reads, in one-letter code: Conotoxin Cal9.2c (52 aa).

The propeptide occupies 1–6 (KKGVTL). 3 cysteine pairs are disulfide-bonded: Cys-14-Cys-31, Cys-19-Cys-41, and Cys-21-Cys-46.

As to expression, expressed by the venom duct.

The protein resides in the secreted. In terms of biological role, probable neurotoxin with unknown target. Possibly targets ion channels. The protein is Conotoxin Cal9.2c of Californiconus californicus (California cone).